The chain runs to 392 residues: MSLNPRDIVVVDAVRTAMAKAKHGAFRNVRAENLSAAVMQALFDRNANLVPAEVDDVIWGCVNQTLEQSMNIARNAAIMTGIPRTVPAQTVNRLCGSSMSALHIATANIKAGMGDFYIIGGVEHMEHVPMTHGVDVNPAASKYAAKAAMMMGLTAELLGKMHGVGREEQDAFGVRSHQRAQAANENGYFDNEIVGVEGHDADGFLRLIDRDEVIRQDANLEDMGKLKPVFDPKGGTVTAGTSSALSVGASALAVMSYERAQALGLEPLARVVSTGVAGCDASIMGYGPVPATQKALKSAGLAIDDIQTVELNEAFAAQSIPVLKDLGLRERMDDAVNLHGGAIALGHPLGCSGARICTTLLNVMRQQDTTLGLATMCIGMGQGVATVFERLK.

Cys95 serves as the catalytic Acyl-thioester intermediate. Catalysis depends on proton acceptor residues His347 and Cys377.

It belongs to the thiolase-like superfamily. Thiolase family. As to quaternary structure, heterotetramer of two alpha chains (FadB) and two beta chains (FadA).

It is found in the cytoplasm. The enzyme catalyses an acyl-CoA + acetyl-CoA = a 3-oxoacyl-CoA + CoA. It functions in the pathway lipid metabolism; fatty acid beta-oxidation. Catalyzes the final step of fatty acid oxidation in which acetyl-CoA is released and the CoA ester of a fatty acid two carbons shorter is formed. This chain is 3-ketoacyl-CoA thiolase, found in Chromohalobacter salexigens (strain ATCC BAA-138 / DSM 3043 / CIP 106854 / NCIMB 13768 / 1H11).